Here is a 263-residue protein sequence, read N- to C-terminus: Chromosomal replication initiator protein DnaA (263 aa).

Asp1 is a region of interest (domain I, interacts with DnaA modulators). Position 1 (Asp1) is a region of interest, domain II. The interval 1-177 (DSGLGKTHLL…GIINKIEFSI (177 aa)) is domain III, AAA+ region. The ATP site is built by Gly3, Gly5, Lys6, and Thr7. Residues 178–263 (IQDNSAAPKI…KNYSEIGVAF (86 aa)) are domain IV, binds dsDNA.

Belongs to the DnaA family. In terms of assembly, oligomerizes as a right-handed, spiral filament on DNA at oriC.

It localises to the cytoplasm. Plays an essential role in the initiation and regulation of chromosomal replication. ATP-DnaA binds to the origin of replication (oriC) to initiate formation of the DNA replication initiation complex once per cell cycle. Binds the DnaA box (a 9 base pair repeat at the origin) and separates the double-stranded (ds)DNA. Forms a right-handed helical filament on oriC DNA; dsDNA binds to the exterior of the filament while single-stranded (ss)DNA is stabiized in the filament's interior. The ATP-DnaA-oriC complex binds and stabilizes one strand of the AT-rich DNA unwinding element (DUE), permitting loading of DNA polymerase. After initiation quickly degrades to an ADP-DnaA complex that is not apt for DNA replication. Binds acidic phospholipids. This Spiroplasma apis protein is Chromosomal replication initiator protein DnaA.